Here is a 613-residue protein sequence, read N- to C-terminus: Dihydroxy-acid dehydratase (613 aa).

Asp-81 contacts Mg(2+). A [2Fe-2S] cluster-binding site is contributed by Cys-122. Mg(2+) contacts are provided by Asp-123 and Lys-124. Lys-124 is modified (N6-carboxylysine). Cys-195 is a [2Fe-2S] cluster binding site. Residue Glu-491 coordinates Mg(2+). The active-site Proton acceptor is Ser-517.

This sequence belongs to the IlvD/Edd family. As to quaternary structure, homodimer. [2Fe-2S] cluster is required as a cofactor. Mg(2+) serves as cofactor.

It carries out the reaction (2R)-2,3-dihydroxy-3-methylbutanoate = 3-methyl-2-oxobutanoate + H2O. The catalysed reaction is (2R,3R)-2,3-dihydroxy-3-methylpentanoate = (S)-3-methyl-2-oxopentanoate + H2O. Its pathway is amino-acid biosynthesis; L-isoleucine biosynthesis; L-isoleucine from 2-oxobutanoate: step 3/4. It participates in amino-acid biosynthesis; L-valine biosynthesis; L-valine from pyruvate: step 3/4. In terms of biological role, functions in the biosynthesis of branched-chain amino acids. Catalyzes the dehydration of (2R,3R)-2,3-dihydroxy-3-methylpentanoate (2,3-dihydroxy-3-methylvalerate) into 2-oxo-3-methylpentanoate (2-oxo-3-methylvalerate) and of (2R)-2,3-dihydroxy-3-methylbutanoate (2,3-dihydroxyisovalerate) into 2-oxo-3-methylbutanoate (2-oxoisovalerate), the penultimate precursor to L-isoleucine and L-valine, respectively. The sequence is that of Dihydroxy-acid dehydratase from Buchnera aphidicola subsp. Schlechtendalia chinensis.